Consider the following 323-residue polypeptide: tRNA U34 carboxymethyltransferase (323 aa).

Carboxy-S-adenosyl-L-methionine is bound by residues lysine 91, tryptophan 105, lysine 110, glycine 130, 152–154 (DPT), 181–182 (IE), methionine 196, tyrosine 200, and arginine 315.

This sequence belongs to the class I-like SAM-binding methyltransferase superfamily. CmoB family. In terms of assembly, homotetramer.

The enzyme catalyses carboxy-S-adenosyl-L-methionine + 5-hydroxyuridine(34) in tRNA = 5-carboxymethoxyuridine(34) in tRNA + S-adenosyl-L-homocysteine + H(+). Catalyzes carboxymethyl transfer from carboxy-S-adenosyl-L-methionine (Cx-SAM) to 5-hydroxyuridine (ho5U) to form 5-carboxymethoxyuridine (cmo5U) at position 34 in tRNAs. The sequence is that of tRNA U34 carboxymethyltransferase from Escherichia coli O8 (strain IAI1).